A 443-amino-acid polypeptide reads, in one-letter code: Transcriptional regulatory protein ZraR (443 aa).

The region spanning 7–121 (DILVVDDDIS…KLQLTLSEAL (115 aa)) is the Response regulatory domain. D56 carries the 4-aspartylphosphate modification. The region spanning 141 to 370 (MVGDSPAMRA…LENAVERAVV (230 aa)) is the Sigma-54 factor interaction domain. G172, T173, R329, and R359 together coordinate ATP. The H-T-H motif DNA-binding region spans 423–442 (KTEAARRLGITRKTLLAKLS).

Post-translationally, phosphorylated by ZraS.

It is found in the cytoplasm. Activity of the ZraS/ZraR two-component system is repressed by the zinc-bound form of ZraP, which probably interacts with the periplasmic region of ZraS. Its function is as follows. Part of the Zra signaling pathway, an envelope stress response (ESR) system composed of the periplasmic accessory protein ZraP, the histidine kinase ZraS and the transcriptional regulator ZraR. The ZraPSR system contributes to antibiotic resistance and is important for membrane integrity in the presence of membrane-targeting biocides. ZraR is a member of the two-component regulatory system ZraS/ZraR. When activated by ZraS, acts in conjunction with sigma-54 to regulate the expression of zraP in the presence of high Zn(2+) or Pb(2+) concentrations. Also positively autoregulates the expression of the zraSR operon. In Klebsiella oxytoca, this protein is Transcriptional regulatory protein ZraR (zraR).